Reading from the N-terminus, the 617-residue chain is Pentatricopeptide repeat-containing protein At4g18520, chloroplastic (617 aa).

A chloroplast-targeting transit peptide spans 1–19 (MFSLSLIQPRLRISEIPVT). 14 PPR repeats span residues 116–146 (VIYFGNNLISSCVRLGDLVYARKVFDSMPEK), 147–181 (NTVTWTAMIDGYLKYGLEDEAFALFEDYVKHGIRF), 183–217 (NERMFVCLLNLCSRRAEFELGRQVHGNMVKVGVGN), 222–247 (SSLVYFYAQCGELTSALRAFDMMEEK), 248–282 (DVISWTAVISACSRKGHGIKAIGMFIGMLNHWFLP), 283–317 (NEFTVCSILKACSEEKALRFGRQVHSLVVKRMIKT), 318–348 (DVFVGTSLMDMYAKCGEISDCRKVFDGMSNR), 349–383 (NTVTWTSIIAAHAREGFGEEAISLFRIMKRRHLIA), 384–418 (NNLTVVSILRACGSVGALLLGKELHAQIIKNSIEK), 419–449 (NVYIGSTLVWLYCKCGESRDAFNVLQQLPSR), 450–484 (DVVSWTAMISGCSSLGHESEALDFLKEMIQEGVEP), 485–519 (NPFTYSSALKACANSESLLIGRSIHSIAKKNHALS), 520–550 (NVFVGSALIHMYAKCGFVSEAFRVFDSMPEK), and 551–585 (NLVSWKAMIMGYARNGFCREALKLMYRMEAEGFEV).

It belongs to the PPR family. PCMP-A subfamily. In terms of assembly, interacts with MORF8/RIP1, MORF2/RIP2 and MORF9/RIP9. As to expression, expressed specifically in aerial greening tissues, such as cotyledons, rosette leaves, cauline leaves, stems, sepals, stamens, carpels and siliques.

The protein resides in the plastid. Its subcellular location is the chloroplast. In terms of biological role, required for proper chloroplast development. Involved in the regulation of plastid gene expression probably through regulation of plastid-encoded polymerase (PEP) dependent chloroplast transcription. Required for RNA editing of several chloroplastic transcripts, especially accD transcripts. Required for processing of the chloroplastic rpoA pre-mRNA. Required for the monocistronic rpoA transcript processing from the rpl23-rpl2-rps19-rpl22-rps3-rpl16-rpl14-rps8-rpl36-rps11-rpoA polycistron. Binds the intergenic sequence of rps11-rpoA for rpoA monocistronic RNA cleavage. The chain is Pentatricopeptide repeat-containing protein At4g18520, chloroplastic (PCMP-A2) from Arabidopsis thaliana (Mouse-ear cress).